The primary structure comprises 192 residues: Pyridoxal 5'-phosphate synthase subunit PdxT (192 aa).

46–48 (GES) serves as a coordination point for L-glutamine. The active-site Nucleophile is C76. Residues R103 and 131–132 (IR) contribute to the L-glutamine site. Residues H167 and E169 each act as charge relay system in the active site.

The protein belongs to the glutaminase PdxT/SNO family. As to quaternary structure, in the presence of PdxS, forms a dodecamer of heterodimers. Only shows activity in the heterodimer.

The enzyme catalyses aldehydo-D-ribose 5-phosphate + D-glyceraldehyde 3-phosphate + L-glutamine = pyridoxal 5'-phosphate + L-glutamate + phosphate + 3 H2O + H(+). It catalyses the reaction L-glutamine + H2O = L-glutamate + NH4(+). The protein operates within cofactor biosynthesis; pyridoxal 5'-phosphate biosynthesis. Functionally, catalyzes the hydrolysis of glutamine to glutamate and ammonia as part of the biosynthesis of pyridoxal 5'-phosphate. The resulting ammonia molecule is channeled to the active site of PdxS. This Koribacter versatilis (strain Ellin345) protein is Pyridoxal 5'-phosphate synthase subunit PdxT.